We begin with the raw amino-acid sequence, 706 residues long: Termination factor NPH-I homolog (706 aa).

Residues 62-227 (IGQGENTRGL…VPCFNMLSGR (166 aa)) form the Helicase ATP-binding domain. Residue 75–82 (HQMGMGKT) participates in ATP binding. The DEAH box signature appears at 168–171 (DEAH). A Helicase C-terminal domain is found at 417–599 (QCLQPLKVLE…HLNSAFRDLL (183 aa)).

It belongs to the DEAD box helicase family. DEAH subfamily. Part of the viral DNA-directed RNA polymerase that consists of 8 polII-like subunits (RPB1, RPB2, RPB3, RPB5, RPB6, RPB7, RPB9, RPB10), a capping enzyme and a termination factor.

The protein resides in the virion. Its function is as follows. Putative DNA-dependent ATPase required for providing the needed energy to achieve the termination of early transcripts. This African swine fever virus (isolate Tick/South Africa/Pretoriuskop Pr4/1996) (ASFV) protein is Termination factor NPH-I homolog.